The following is a 490-amino-acid chain: Cysteine protease 1 (490 aa).

The N-terminal stretch at 1 to 31 (MAGGGGKSVAAALAMACFLLILAAFAPPAAA) is a signal peptide. The propeptide at 32–154 (APPDIMSIIR…EAYRHDGVEA (123 aa)) is activation peptide. 5 cysteine pairs are disulfide-bonded: Cys177–Cys220, Cys211–Cys253, Cys311–Cys364, Cys395–Cys407, and Cys401–Cys422. Cys180 is an active-site residue. Active-site residues include His317 and Asn339. Asn356 carries N-linked (GlcNAc...) asparagine glycosylation. The propeptide at 379–490 (NPKPSPPSPA…FVVLNREDLV (112 aa)) is removed in mature form.

Belongs to the peptidase C1 family. Highly expressed in the tapetum and developing pollen of the anther locules. Weakly expressed in root and germinating seed, hardly in the anther-less-flower and not detected in leaf.

Its function is as follows. Cysteine protease that may play a role in pollen development. May be regulated by the transcription factor UDT1 in developing anthers and play a role in tapetum development. Positively regulated by the transcription factor TDR in developing anthers and may play a role in tapetum programmed cell death (PCD). The polypeptide is Cysteine protease 1 (CP1) (Oryza sativa subsp. japonica (Rice)).